Consider the following 524-residue polypeptide: Bifunctional purine biosynthesis protein PurH (524 aa).

The 154-residue stretch at 1-154 folds into the MGS-like domain; the sequence is MTRLALLSTS…KNHAHVTVLC (154 aa).

Belongs to the PurH family.

It carries out the reaction (6R)-10-formyltetrahydrofolate + 5-amino-1-(5-phospho-beta-D-ribosyl)imidazole-4-carboxamide = 5-formamido-1-(5-phospho-D-ribosyl)imidazole-4-carboxamide + (6S)-5,6,7,8-tetrahydrofolate. The enzyme catalyses IMP + H2O = 5-formamido-1-(5-phospho-D-ribosyl)imidazole-4-carboxamide. The protein operates within purine metabolism; IMP biosynthesis via de novo pathway; 5-formamido-1-(5-phospho-D-ribosyl)imidazole-4-carboxamide from 5-amino-1-(5-phospho-D-ribosyl)imidazole-4-carboxamide (10-formyl THF route): step 1/1. Its pathway is purine metabolism; IMP biosynthesis via de novo pathway; IMP from 5-formamido-1-(5-phospho-D-ribosyl)imidazole-4-carboxamide: step 1/1. The protein is Bifunctional purine biosynthesis protein PurH of Acaryochloris marina (strain MBIC 11017).